Here is a 195-residue protein sequence, read N- to C-terminus: Imidazoleglycerol-phosphate dehydratase (195 aa).

It belongs to the imidazoleglycerol-phosphate dehydratase family.

Its subcellular location is the cytoplasm. The enzyme catalyses D-erythro-1-(imidazol-4-yl)glycerol 3-phosphate = 3-(imidazol-4-yl)-2-oxopropyl phosphate + H2O. It functions in the pathway amino-acid biosynthesis; L-histidine biosynthesis; L-histidine from 5-phospho-alpha-D-ribose 1-diphosphate: step 6/9. The polypeptide is Imidazoleglycerol-phosphate dehydratase (Endomicrobium trichonymphae).